The primary structure comprises 653 residues: Chaperone protein DnaK (653 aa).

Residue Thr200 is modified to Phosphothreonine; by autocatalysis. Residues 612–653 (QGAAGAAGAAGGAGAAAGAEAAGASQQADDVVDAEFKEVKKD) are disordered. The segment covering 627 to 639 (AAGAEAAGASQQA) has biased composition (low complexity).

The protein belongs to the heat shock protein 70 family.

Acts as a chaperone. In Paraburkholderia phymatum (strain DSM 17167 / CIP 108236 / LMG 21445 / STM815) (Burkholderia phymatum), this protein is Chaperone protein DnaK.